The primary structure comprises 126 residues: Fluoride-specific ion channel FluC 2 (126 aa).

Transmembrane regions (helical) follow at residues 7 to 27 (MWVG…GLSI), 37 to 57 (LGTF…SILF), 65 to 85 (YGDL…TTFS), and 101 to 121 (AIAA…AAFG). Na(+)-binding residues include Gly79 and Thr82.

Belongs to the fluoride channel Fluc/FEX (TC 1.A.43) family.

It localises to the cell inner membrane. The enzyme catalyses fluoride(in) = fluoride(out). Its activity is regulated as follows. Na(+) is not transported, but it plays an essential structural role and its presence is essential for fluoride channel function. Fluoride-specific ion channel. Important for reducing fluoride concentration in the cell, thus reducing its toxicity. This chain is Fluoride-specific ion channel FluC 2, found in Yersinia pseudotuberculosis serotype I (strain IP32953).